A 486-amino-acid polypeptide reads, in one-letter code: Monocarboxylate transporter 12 (486 aa).

Topologically, residues 1-9 (MTKITRVGS) are cytoplasmic. The next 6 membrane-spanning stretches (helical) occupy residues 10-30 (ASPP…LVTI), 58-78 (AWIH…GSVV), 86-106 (AGIM…SFAT), 115-135 (LGVL…AMVG), 148-168 (IAMS…QLLI), and 177-197 (LLIL…MRPI). Positions 201–220 (EDPSGPEKSHDRDAQREDCK) are enriched in basic and acidic residues. The tract at residues 201-221 (EDPSGPEKSHDRDAQREDCKQ) is disordered. Transmembrane regions (helical) follow at residues 253–273 (FVVL…LFVY), 289–309 (AFLM…FGWL), 320–340 (YVCY…LPML), 353–373 (FGYF…EIVG), 383–403 (VVYF…GWLV), and 410–430 (TAAF…LGFA). The Cytoplasmic portion of the chain corresponds to 431 to 486 (KIAKRMKRTQVPFLVKDSDPKLHLWTNGSVAYSIAKELDQKDEESLAKARTGCNLT).

The protein belongs to the major facilitator superfamily. Monocarboxylate porter (TC 2.A.1.13) family. In terms of assembly, interacts with isoform 2 of BSG; this interaction is required for its localization to the plasma membrane. As to expression, detected in kidney, choroid plexus, testis, lung, stomach, large and small intestine, spleen, fat and parotid gland. In eye, expressed in cornea, ciliary epithelium, lens epithelium and lens fiber.

It is found in the cell membrane. Its subcellular location is the basolateral cell membrane. The catalysed reaction is creatine(in) = creatine(out). The enzyme catalyses guanidinoacetate(in) = guanidinoacetate(out). With respect to regulation, creatine uptake is inhibited by carbonyl cyanide 3-chlorophenylhydrazone (CCCP) and by valinomycin. Functions as a transporter for creatine and as well for its precursor guanidinoacetate. Transport of creatine and GAA is independent of resting membrane potential and extracellular Na(+), Cl(-), or pH. Contributes to the process of creatine biosynthesis and distribution. In Rattus norvegicus (Rat), this protein is Monocarboxylate transporter 12.